The following is a 366-amino-acid chain: Galactoside alpha-(1,2)-fucosyltransferase 1 (366 aa).

The Cytoplasmic segment spans residues 1-8 (MWPLSHRH). The chain crosses the membrane as a helical; Signal-anchor for type II membrane protein span at residues 9-25 (LCLAFLLVCVLSAISFF). At 26–366 (LHIHQDSIRH…LSPLWTLAEP (341 aa)) the chain is on the lumenal side. N-linked (GlcNAc...) asparagine glycosylation is found at Asn-66, Asn-302, and Asn-328.

This sequence belongs to the glycosyltransferase 11 family.

The protein localises to the golgi apparatus. It localises to the golgi stack membrane. It carries out the reaction a beta-D-galactosyl-(1-&gt;4)-N-acetyl-beta-D-glucosaminyl derivative + GDP-beta-L-fucose = an alpha-L-Fuc-(1-&gt;2)-beta-D-Gal-(1-&gt;4)-beta-D-GlcNAc derivative + GDP + H(+). It catalyses the reaction a ganglioside GA1 + GDP-beta-L-fucose = a ganglioside Fuc-GA1 + GDP + H(+). The catalysed reaction is a beta-D-Gal-(1-&gt;3)-beta-D-GlcNAc-(1-&gt;3)-beta-D-Gal-(1-&gt;4)-beta-D-Glc-(1&lt;-&gt;1')-Cer(d18:1(4E)) + GDP-beta-L-fucose = alpha-L-fucosyl-(1-&gt;2)- beta-D-galactosyl-(1-&gt;3)-N-acetyl-beta-D-glucosaminyl-(1-&gt;3)-beta-D-galactosyl-(1-&gt;4)-beta-D-glucosyl-(1&lt;-&gt;1')-N-acylsphing-4-enine + GDP + H(+). The enzyme catalyses a neolactoside nLc4Cer(d18:1(4E)) + GDP-beta-L-fucose = a neolactoside IV(2)-alpha-Fuc-nLc4Cer(d18:1(4E)) + GDP + H(+). It carries out the reaction a ganglioside GM1 + GDP-beta-L-fucose = a ganglioside Fuc-GM1 + GDP + H(+). It catalyses the reaction beta-D-galactosyl-(1-&gt;3)-N-acetyl-D-galactosamine + GDP-beta-L-fucose = alpha-L-fucosyl-(1-&gt;2)-beta-D-galactosyl-(1-&gt;3)-N-acetyl-D-galactosamine + GDP + H(+). It functions in the pathway protein modification; protein glycosylation. Catalyzes the transfer of L-fucose, from a guanosine diphosphate-beta-L-fucose, to the terminal galactose residue of glycoconjugates through an alpha(1,2) linkage leading to H antigen synthesis that is an intermediate substrate in the synthesis of ABO blood group antigens. H antigen is essential for maturation of the glomerular layer of the main olfactory bulb, in cell migration and early cell-cell contacts during tumor associated angiogenesis. Preferentially fucosylates soluble lactose and to a lesser extent fucosylates glycolipids gangliosides GA1 and GM1a. This is Galactoside alpha-(1,2)-fucosyltransferase 1 from Aotus nancymaae (Ma's night monkey).